We begin with the raw amino-acid sequence, 951 residues long: Autophagy-related protein 9 (951 aa).

Residues 1–165 (MMTSNILSRF…APGPSSRADR (165 aa)) are disordered. Over 1–239 (MMTSNILSRF…NGIWSILLNR (239 aa)) the chain is Cytoplasmic. The span at 16 to 33 (SPSVYETLRQQDAESNPS) shows a compositional bias: polar residues. Over residues 35-54 (VEERAGLEFEDDRRTQFSDR) the composition is skewed to basic and acidic residues. Over residues 79 to 94 (FLTQRSPQRTSGTATA) the composition is skewed to polar residues. Basic residues predominate over residues 97–108 (GGRRRKHSRPRW). Residues 240–260 (GLSLLTFAFVVGFSTFLTNCI) form a helical membrane-spanning segment. Residues 261-288 (DYRNFRGSRKMDDILIQQCTKKMSMSST) are Lumenal-facing. Residues 289-309 (FLLWLLTVFWIGKAFQYLMDI) form a helical membrane-spanning segment. The Cytoplasmic segment spans residues 310 to 455 (RRLKHMHDFY…KALSEGLRRR (146 aa)). Residues 456-476 (FIFAGIMNIFVAPFIVVYFLM) lie within the membrane without spanning it. At 477 to 542 (HYFFRYFNEY…QFPKDKTVQV (66 aa)) the chain is on the cytoplasmic side. A helical membrane pass occupies residues 543 to 563 (AGFVAFVSGALASVLALVSII). Residues 564–577 (DPELFLGFEITHDR) lie on the Lumenal side of the membrane. A helical transmembrane segment spans residues 578-598 (TVLFYLGVFGSVWAFARGLVP). Topologically, residues 599-644 (EETNVFDPEFALLEVIDFTHYFPNHWKGRLHSDEVRKEFAVLYQMK) are cytoplasmic. An intramembrane segment occupies 645-665 (IVIFLEEILSMIFTPFILWFS). Residues 666 to 951 (LPKCSDRLID…DNRGRTTVGI (286 aa)) are Cytoplasmic-facing. A disordered region spans residues 848-897 (SRPVRPITDPIEDDNESPSAEIRRGAVKKSPHTTTGSSGGAIGTSDSNLG).

It belongs to the ATG9 family. Homotrimer; forms a homotrimer with a central pore that forms a path between the two membrane leaflets. In terms of processing, phosphorylated by atg1. Atg1 phosphorylation is required for preautophagosome elongation.

It is found in the preautophagosomal structure membrane. Its subcellular location is the cytoplasmic vesicle membrane. The protein resides in the golgi apparatus membrane. The protein localises to the endoplasmic reticulum membrane. It carries out the reaction a 1,2-diacyl-sn-glycero-3-phosphocholine(in) = a 1,2-diacyl-sn-glycero-3-phosphocholine(out). The enzyme catalyses a 1,2-diacyl-sn-glycero-3-phospho-L-serine(in) = a 1,2-diacyl-sn-glycero-3-phospho-L-serine(out). It catalyses the reaction a 1,2-diacyl-sn-glycero-3-phosphoethanolamine(in) = a 1,2-diacyl-sn-glycero-3-phosphoethanolamine(out). The catalysed reaction is a 1,2-diacyl-sn-glycero-3-phospho-(1D-myo-inositol-3-phosphate)(in) = a 1,2-diacyl-sn-glycero-3-phospho-(1D-myo-inositol-3-phosphate)(out). Its function is as follows. Phospholipid scramblase involved in autophagy and cytoplasm to vacuole transport (Cvt) vesicle formation. Cycles between the preautophagosomal structure/phagophore assembly site (PAS) and the cytoplasmic vesicle pool and supplies membrane for the growing autophagosome. Lipid scramblase activity plays a key role in preautophagosomal structure/phagophore assembly by distributing the phospholipids that arrive through atg2 from the cytoplasmic to the luminal leaflet of the bilayer, thereby driving autophagosomal membrane expansion. Required for mitophagy. Also involved in endoplasmic reticulum-specific autophagic process and is essential for the survival of cells subjected to severe ER stress. Different machineries are required for anterograde trafficking to the PAS during either the Cvt pathway or bulk autophagy and for retrograde trafficking. The chain is Autophagy-related protein 9 (atg9) from Aspergillus oryzae (strain ATCC 42149 / RIB 40) (Yellow koji mold).